We begin with the raw amino-acid sequence, 166 residues long: Putative 4-hydroxy-4-methyl-2-oxoglutarate aldolase (166 aa).

Residues 74-77 (GDQI) and R96 contribute to the substrate site. D97 contributes to the a divalent metal cation binding site.

The protein belongs to the class II aldolase/RraA-like family. In terms of assembly, homotrimer. A divalent metal cation is required as a cofactor.

The enzyme catalyses 4-hydroxy-4-methyl-2-oxoglutarate = 2 pyruvate. It catalyses the reaction oxaloacetate + H(+) = pyruvate + CO2. Its function is as follows. Catalyzes the aldol cleavage of 4-hydroxy-4-methyl-2-oxoglutarate (HMG) into 2 molecules of pyruvate. Also contains a secondary oxaloacetate (OAA) decarboxylase activity due to the common pyruvate enolate transition state formed following C-C bond cleavage in the retro-aldol and decarboxylation reactions. The sequence is that of Putative 4-hydroxy-4-methyl-2-oxoglutarate aldolase from Xanthomonas campestris pv. campestris (strain B100).